Consider the following 107-residue polypeptide: U-scoloptoxin(19)-Sm1a (107 aa).

The first 20 residues, 1–20 (MRFLVSVAFLLTVSSLLVSG), serve as a signal peptide directing secretion.

This sequence belongs to the scoloptoxin-19 family. In terms of processing, contains 6 disulfide bonds. In terms of tissue distribution, expressed by the venom gland.

Its subcellular location is the secreted. The polypeptide is U-scoloptoxin(19)-Sm1a (Scolopendra morsitans (Tanzanian blue ringleg centipede)).